The primary structure comprises 249 residues: 2-dehydro-3-deoxy-L-rhamnonate dehydrogenase (NAD(+)) (249 aa).

Tyrosine 156 functions as the Proton acceptor in the catalytic mechanism.

It belongs to the short-chain dehydrogenases/reductases (SDR) family. As to quaternary structure, homotetramer.

The enzyme catalyses 2-dehydro-3-deoxy-L-rhamnonate + NAD(+) = 2,4-didehydro-3-deoxy-L-rhamnonate + NADH + H(+). Its pathway is carbohydrate degradation; L-rhamnose degradation. Its function is as follows. Catalyzes the NAD(+)-dependent dehydrogenation of 2-dehydro-3-deoxy-L-rhamnonate to form 2,4-didehydro-3-deoxy-L-rhamnonate. Does not show any detectable activity in the presence of NADP(+). Catalyzes the fourth step in an alternative pathway for rhamnose utilization that does not involve phosphorylated intermediates. This Sphingomonas sp. (strain SKA58) protein is 2-dehydro-3-deoxy-L-rhamnonate dehydrogenase (NAD(+)).